The sequence spans 341 residues: HTH-type transcriptional repressor PurR (341 aa).

The HTH lacI-type domain maps to 2-56; it reads ATIKDVAKRAGVSTTTVSHVINKTRFVAENTRAAVWAAIKELNYSPSAVARSLKV. The segment at residues 4–23 is a DNA-binding region (H-T-H motif); the sequence is IKDVAKRAGVSTTTVSHVIN. A DNA-binding region spans residues 48–56; the sequence is SAVARSLKV. 5 residues coordinate hypoxanthine: Tyr73, Arg190, Thr192, Phe221, and Asp275.

As to quaternary structure, homodimer.

Its pathway is purine metabolism; purine nucleotide biosynthesis [regulation]. Its function is as follows. Is the main repressor of the genes involved in the de novo synthesis of purine nucleotides, regulating purB, purC, purEK, purF, purHD, purL, purMN and guaBA expression. PurR is allosterically activated to bind its cognate DNA by binding the purine corepressors, hypoxanthine or guanine, thereby effecting transcription repression. The protein is HTH-type transcriptional repressor PurR of Proteus mirabilis (strain HI4320).